We begin with the raw amino-acid sequence, 433 residues long: MTRYLVRPGSRLAGRFPVPGDKSISHRAVILGALAEGVTEVEGLLEGADVLATIAAFRSMGVQMEGPDKGHLRIHGAGLQGLRAPVVPLDCGNSGTAMRLLAGVLAGQPFPSTLVGDASLQKRPMGRILNPLRAMGAEIAAQDGRAPLHIHGRPLHGIDYALPVASAQVKSAVLLAGLYADGQTCVTEPAPTRDHSERMLQGFGQPVERHGPRACLRGGGRLCGQALQVPGDISSAAFFLLGATIAPGSDLTLEGVGINPTRTGIIEILTRMGARIDLTALREVGGEPVADIRVRYAPLQGIAIPPRLVPLAIDEFPALFIAAACAKGQTVITGAEELRVKESDRIAVMAGGLRALGATVEERVDGAIISGSALLGGRVDSHGDHRIAMAFAMAALVAQGDMEILDCANVATSFPSFPALAQQAGLLLEVASA.

Positions 22, 23, and 27 each coordinate 3-phosphoshikimate. Residue Lys22 coordinates phosphoenolpyruvate. Positions 95 and 123 each coordinate phosphoenolpyruvate. The 3-phosphoshikimate site is built by Ser166, Gln168, Asp314, and Lys341. Gln168 contacts phosphoenolpyruvate. The active-site Proton acceptor is Asp314. 2 residues coordinate phosphoenolpyruvate: Arg345 and Arg386.

This sequence belongs to the EPSP synthase family. Monomer.

The protein localises to the cytoplasm. It carries out the reaction 3-phosphoshikimate + phosphoenolpyruvate = 5-O-(1-carboxyvinyl)-3-phosphoshikimate + phosphate. It participates in metabolic intermediate biosynthesis; chorismate biosynthesis; chorismate from D-erythrose 4-phosphate and phosphoenolpyruvate: step 6/7. In terms of biological role, catalyzes the transfer of the enolpyruvyl moiety of phosphoenolpyruvate (PEP) to the 5-hydroxyl of shikimate-3-phosphate (S3P) to produce enolpyruvyl shikimate-3-phosphate and inorganic phosphate. The chain is 3-phosphoshikimate 1-carboxyvinyltransferase from Acidithiobacillus ferrooxidans (strain ATCC 23270 / DSM 14882 / CIP 104768 / NCIMB 8455) (Ferrobacillus ferrooxidans (strain ATCC 23270)).